A 154-amino-acid chain; its full sequence is Large ribosomal subunit protein uL13 (154 aa).

It belongs to the universal ribosomal protein uL13 family. In terms of assembly, part of the 50S ribosomal subunit.

In terms of biological role, this protein is one of the early assembly proteins of the 50S ribosomal subunit, although it is not seen to bind rRNA by itself. It is important during the early stages of 50S assembly. This chain is Large ribosomal subunit protein uL13, found in Sinorhizobium medicae (strain WSM419) (Ensifer medicae).